The primary structure comprises 278 residues: Urease accessory protein UreD 3 (278 aa).

This sequence belongs to the UreD family. In terms of assembly, ureD, UreF and UreG form a complex that acts as a GTP-hydrolysis-dependent molecular chaperone, activating the urease apoprotein by helping to assemble the nickel containing metallocenter of UreC. The UreE protein probably delivers the nickel.

Its subcellular location is the cytoplasm. Its function is as follows. Required for maturation of urease via the functional incorporation of the urease nickel metallocenter. This Bradyrhizobium sp. (strain BTAi1 / ATCC BAA-1182) protein is Urease accessory protein UreD 3.